The following is a 476-amino-acid chain: RuvB-like 1 (476 aa).

Residues 1 to 23 (MDMEVDEAISGTSSSRLAPIEEV) are disordered. 89 to 96 (GPPATGKT) serves as a coordination point for ATP.

This sequence belongs to the RuvB family. As to quaternary structure, forms homohexameric rings. May form a dodecamer with ruvb-2 made of two stacked hexameric rings. In terms of tissue distribution, expressed in gonadal cells.

It localises to the cytoplasm. The protein localises to the nucleus. It carries out the reaction ATP + H2O = ADP + phosphate + H(+). Possesses single-stranded DNA-stimulated ATPase and ATP dependent DNA helicase (3' to 5') activity suggesting a role in nuclear processes such as recombination and transcription. May participate in several chromatin remodeling complexes that mediate the ATP-dependent exchange of histones and remodel chromatin by shifting nucleosomes. Involvement in these complexes is likely required for transcriptional activation of selected genes and DNA repair in response to DNA damage. Involved in the Ce-Tor signaling pathway whereby it is required for the accumulation and localization of box C/D snoRNP to nucleoli to regulate ribosomal maturation and thus protein synthesis. Antagonizes the transcriptional activity of transcription factor pha-4, to control postembryonic development and adult longevity. Has a role in pharyngeal development. Has a role in gonadal development. This Caenorhabditis elegans protein is RuvB-like 1.